Here is a 472-residue protein sequence, read N- to C-terminus: uncharacterized protein (472 aa).

Belongs to the AllG family.

This is an uncharacterized protein from Escherichia coli (strain K12).